A 45-amino-acid chain; its full sequence is Large ribosomal subunit protein bL34 (45 aa).

It belongs to the bacterial ribosomal protein bL34 family.

The sequence is that of Large ribosomal subunit protein bL34 from Clavibacter michiganensis subsp. michiganensis (strain NCPPB 382).